Consider the following 516-residue polypeptide: Circadian clock oscillator protein KaiC (516 aa).

2 KaiC domains span residues 1–244 and 258–516; these read MNQP…INIF and ARIS…TLPE. Residues glycine 46, threonine 47, glycine 48, lysine 49, threonine 50, leucine 51, serine 86, lysine 221, leucine 222, arginine 223, threonine 225, histidine 227, threonine 237, threonine 287, glycine 288, threonine 289, glycine 290, lysine 291, threonine 292, and leucine 293 each contribute to the ATP site. Position 50 (threonine 50) interacts with Mg(2+). Threonine 292 provides a ligand contact to Mg(2+). Glutamate 315 lines the Mg(2+) pocket. Tryptophan 328 is an ATP binding site. Serine 428 is modified (phosphoserine; by autocatalysis). Threonine 429 is subject to Phosphothreonine; by autocatalysis. Residues arginine 448, lysine 454, methionine 455, arginine 456, serine 458, histidine 460, and lysine 462 each coordinate ATP.

It belongs to the KaiC family. In terms of assembly, homohexamer; hexamerization is dependent on ATP-binding. The KaiABC complex composition changes during the circadian cycle to control KaiC phosphorylation. Complexes KaiC(6), KaiA(2-4):KaiC(6), KaiB(6):KaiC(6) and KaiC(6):KaiB(6):KaiA(12) are among the most important forms, many form cooperatively. KaiC interacts with SasA, activating its autokinase function and leading to RpaA activation. Requires Mg(2+) as cofactor. Post-translationally, phosphorylated on serine and threonine residues by autocatalysis. Has a 4 step phosphorylation cycle; the autokinase acts first on Thr-429, then Ser-428. When Ser-428 is modified KaiC switches to an autophosphatase mode, acting first on phospho-Thr-429 then phospho-Ser-428.

The enzyme catalyses L-seryl-[protein] + ATP = O-phospho-L-seryl-[protein] + ADP + H(+). The catalysed reaction is L-threonyl-[protein] + ATP = O-phospho-L-threonyl-[protein] + ADP + H(+). It carries out the reaction ATP + H2O = ADP + phosphate + H(+). The interaction with KaiA enhances its phosphorylation status, while the interaction with KaiB decreases it. Its function is as follows. Central component of the KaiABC oscillator complex, which constitutes the main circadian regulator in cyanobacteria. Complex composition changes during the circadian cycle to control KaiC phosphorylation. KaiA stimulates KaiC autophosphorylation, while KaiB sequesters KaiA, leading to KaiC autodephosphorylation. Clock output pathways impact the RpaA transcriptional regulator. KaiC enhances the autophosphorylation activity of SasA, which then transfers its phosphate group to RpaA to activate it. KaiB and KaiC together enhance the phospho-RpaA dephosphatase activity of CikA. Functionally, has a weak, temperature-independent ATPase activity; ATPase activity defines the circadian period. The phosphorylation state of KaiC modulates its ATPase activity and effects KaiB binding. This chain is Circadian clock oscillator protein KaiC, found in Picosynechococcus sp. (strain ATCC 27264 / PCC 7002 / PR-6) (Agmenellum quadruplicatum).